An 86-amino-acid chain; its full sequence is Small ribosomal subunit protein bS20 (86 aa).

The interval 1–26 (MANIKSAKKRAITSEKRRQHNASRRS) is disordered.

It belongs to the bacterial ribosomal protein bS20 family.

Functionally, binds directly to 16S ribosomal RNA. This chain is Small ribosomal subunit protein bS20, found in Photobacterium profundum (strain SS9).